The chain runs to 559 residues: CTP synthase (559 aa).

The tract at residues 1–270 (MTKFVFVTGG…DGLICDKLRL (270 aa)) is amidoligase domain. Position 13 (serine 13) interacts with CTP. A UTP-binding site is contributed by serine 13. ATP contacts are provided by residues 14 to 19 (SLGKGI) and aspartate 71. Residues aspartate 71 and glutamate 144 each contribute to the Mg(2+) site. CTP is bound by residues 151–153 (DIE), 191–196 (KTKPTQ), and lysine 227. UTP-binding positions include 191 to 196 (KTKPTQ) and lysine 227. The Glutamine amidotransferase type-1 domain occupies 295-548 (TIAMVGKYVD…IKAAIDHQKS (254 aa)). Glycine 357 provides a ligand contact to L-glutamine. Cysteine 384 acts as the Nucleophile; for glutamine hydrolysis in catalysis. L-glutamine is bound by residues 385-388 (LGMQ), glutamate 408, and arginine 474. Catalysis depends on residues histidine 521 and glutamate 523.

This sequence belongs to the CTP synthase family. In terms of assembly, homotetramer.

The enzyme catalyses UTP + L-glutamine + ATP + H2O = CTP + L-glutamate + ADP + phosphate + 2 H(+). The catalysed reaction is L-glutamine + H2O = L-glutamate + NH4(+). It carries out the reaction UTP + NH4(+) + ATP = CTP + ADP + phosphate + 2 H(+). It functions in the pathway pyrimidine metabolism; CTP biosynthesis via de novo pathway; CTP from UDP: step 2/2. With respect to regulation, allosterically activated by GTP, when glutamine is the substrate; GTP has no effect on the reaction when ammonia is the substrate. The allosteric effector GTP functions by stabilizing the protein conformation that binds the tetrahedral intermediate(s) formed during glutamine hydrolysis. Inhibited by the product CTP, via allosteric rather than competitive inhibition. Functionally, catalyzes the ATP-dependent amination of UTP to CTP with either L-glutamine or ammonia as the source of nitrogen. Regulates intracellular CTP levels through interactions with the four ribonucleotide triphosphates. This chain is CTP synthase, found in Paracidovorax citrulli (strain AAC00-1) (Acidovorax citrulli).